The sequence spans 923 residues: Dynein axonemal intermediate chain 3 (923 aa).

Positions 1–35 (MAPKPPKSPKGQKKGKKNMKQQLLVPEEEEPMNME) are disordered. The segment covering 10–19 (KGQKKGKKNM) has biased composition (basic residues). 4 WD repeats span residues 398–438 (ESPD…DRIE), 480–536 (GHRK…PAVT), 702–741 (VHDGAVHTIQRSPFFNDIVLTVGGWNVAIWKEEVMTGPLL), and 745–785 (CGPK…HEPA). The stretch at 869 to 889 (LELVKKKAKIYQKTKEQMEAE) forms a coiled coil.

In terms of assembly, interacts with ACTR2; this interaction reduces binding of the Arp2/3 complex to the VCA domain of nucleation promoting factors. Part of the multisubunit axonemal dynein complex formed at least of two heavy chains and a number of intermediate and light chains. Found in a associated with the catalytic heavy chain DNAH2, the intermediate chain DNAI4, and the light chain DYNLT1. In terms of tissue distribution, strongly expressed in the testes. Detected also in brain and lung tissues.

The protein resides in the cytoplasm. Its function is as follows. Acts as a negative regulator of cell migration, invasion, and metastasis downstream of p53/TP53, through inhibition of Arp2/3 complex-mediated actin polymerization. Via its association with the multisubunit axonemal dynein complex, is potentially involved in the regulation of cilia function. May play a role in osteogenesis of dental tissue-derived mesenchymal stem cells. This Mus musculus (Mouse) protein is Dynein axonemal intermediate chain 3 (Dnai3).